The sequence spans 258 residues: Acyl-[acyl-carrier-protein]--UDP-N-acetylglucosamine O-acyltransferase (258 aa).

This sequence belongs to the transferase hexapeptide repeat family. LpxA subfamily. Homotrimer.

Its subcellular location is the cytoplasm. The enzyme catalyses a (3R)-hydroxyacyl-[ACP] + UDP-N-acetyl-alpha-D-glucosamine = a UDP-3-O-[(3R)-3-hydroxyacyl]-N-acetyl-alpha-D-glucosamine + holo-[ACP]. Its pathway is glycolipid biosynthesis; lipid IV(A) biosynthesis; lipid IV(A) from (3R)-3-hydroxytetradecanoyl-[acyl-carrier-protein] and UDP-N-acetyl-alpha-D-glucosamine: step 1/6. In terms of biological role, involved in the biosynthesis of lipid A, a phosphorylated glycolipid that anchors the lipopolysaccharide to the outer membrane of the cell. This is Acyl-[acyl-carrier-protein]--UDP-N-acetylglucosamine O-acyltransferase from Neisseria meningitidis serogroup A / serotype 4A (strain DSM 15465 / Z2491).